Consider the following 149-residue polypeptide: Probable flagellum biosynthesis repressor protein FlbT (149 aa).

It belongs to the FlbT family.

Functionally, has a post-transcriptional repressor function in flagellum biogenesis. Associates with the 5'-UTR of fljK mRNA and promotes its degradation. The sequence is that of Probable flagellum biosynthesis repressor protein FlbT from Rhizobium johnstonii (strain DSM 114642 / LMG 32736 / 3841) (Rhizobium leguminosarum bv. viciae).